The primary structure comprises 154 residues: 3-hydroxyacyl-[acyl-carrier-protein] dehydratase FabZ (154 aa).

Residue histidine 58 is part of the active site.

It belongs to the thioester dehydratase family. FabZ subfamily.

It localises to the cytoplasm. It catalyses the reaction a (3R)-hydroxyacyl-[ACP] = a (2E)-enoyl-[ACP] + H2O. Functionally, involved in unsaturated fatty acids biosynthesis. Catalyzes the dehydration of short chain beta-hydroxyacyl-ACPs and long chain saturated and unsaturated beta-hydroxyacyl-ACPs. The protein is 3-hydroxyacyl-[acyl-carrier-protein] dehydratase FabZ of Protochlamydia amoebophila (strain UWE25).